A 606-amino-acid polypeptide reads, in one-letter code: Lysosomal cobalamin transporter ABCD4 (606 aa).

An ABC transmembrane type-1 domain is found at 39 to 332; sequence NVLMFMTLLC…CFTQLIDLST (294 aa). The next 5 helical transmembrane spans lie at 43-63, 76-96, 190-210, 279-299, and 314-334; these read FMTL…VGLI, LDGF…NSTL, IFGY…PIVT, YLGS…GVYG, and AFVC…STTL. Residues 389 to 603 form the ABC transporter domain; that stretch reads LDRVSILAPS…GGGSWELTRI (215 aa). Position 421 to 428 (421 to 428) interacts with ATP; that stretch reads GNTGTGKT.

This sequence belongs to the ABC transporter superfamily. ABCD family. Peroxisomal fatty acyl CoA transporter (TC 3.A.1.203) subfamily. In terms of assembly, homodimer or heterodimer. Interacts with LMBRD1; this interaction induces the translocation of ABCD4 from the ER to the lysosome membrane. Interacts with LMBRD1 and MMACHC; this interaction ensures the transport of cobalamin from the lysosome to the cytosol.

It localises to the endoplasmic reticulum membrane. The protein resides in the lysosome membrane. It catalyses the reaction an R-cob(III)alamin(out) + ATP + H2O = an R-cob(III)alamin(in) + ADP + phosphate + H(+). Lysosomal membrane protein that transports cobalamin (Vitamin B12) from the lysosomal lumen to the cytosol in an ATP-dependent manner. Targeted by LMBRD1 lysosomal chaperone from the endoplasmic reticulum to the lysosomal membrane. Then forms a complex with lysosomal chaperone LMBRD1 and cytosolic MMACHC to transport cobalamin across the lysosomal membrane. This is Lysosomal cobalamin transporter ABCD4 from Mus musculus (Mouse).